Reading from the N-terminus, the 309-residue chain is Aspartate carbamoyltransferase catalytic subunit (309 aa).

Carbamoyl phosphate-binding residues include arginine 55 and threonine 56. Position 85 (lysine 85) interacts with L-aspartate. The carbamoyl phosphate site is built by arginine 106, histidine 135, and glutamine 138. Residues arginine 168 and arginine 230 each contribute to the L-aspartate site. Residues leucine 268 and proline 269 each coordinate carbamoyl phosphate.

The protein belongs to the aspartate/ornithine carbamoyltransferase superfamily. ATCase family. As to quaternary structure, heterododecamer (2C3:3R2) of six catalytic PyrB chains organized as two trimers (C3), and six regulatory PyrI chains organized as three dimers (R2).

It catalyses the reaction carbamoyl phosphate + L-aspartate = N-carbamoyl-L-aspartate + phosphate + H(+). It participates in pyrimidine metabolism; UMP biosynthesis via de novo pathway; (S)-dihydroorotate from bicarbonate: step 2/3. Functionally, catalyzes the condensation of carbamoyl phosphate and aspartate to form carbamoyl aspartate and inorganic phosphate, the committed step in the de novo pyrimidine nucleotide biosynthesis pathway. The chain is Aspartate carbamoyltransferase catalytic subunit from Vibrio cholerae serotype O1 (strain ATCC 39315 / El Tor Inaba N16961).